A 261-amino-acid polypeptide reads, in one-letter code: Indole-3-glycerol phosphate synthase (261 aa).

This sequence belongs to the TrpC family.

It carries out the reaction 1-(2-carboxyphenylamino)-1-deoxy-D-ribulose 5-phosphate + H(+) = (1S,2R)-1-C-(indol-3-yl)glycerol 3-phosphate + CO2 + H2O. It functions in the pathway amino-acid biosynthesis; L-tryptophan biosynthesis; L-tryptophan from chorismate: step 4/5. The protein is Indole-3-glycerol phosphate synthase of Alkaliphilus metalliredigens (strain QYMF).